The sequence spans 310 residues: Aspartate carbamoyltransferase catalytic subunit (310 aa).

R55 and T56 together coordinate carbamoyl phosphate. K83 contacts L-aspartate. Carbamoyl phosphate is bound by residues R105, H133, and Q136. Residues R166 and R220 each contribute to the L-aspartate site. Carbamoyl phosphate contacts are provided by G261 and P262.

The protein belongs to the aspartate/ornithine carbamoyltransferase superfamily. ATCase family. Heterododecamer (2C3:3R2) of six catalytic PyrB chains organized as two trimers (C3), and six regulatory PyrI chains organized as three dimers (R2).

The enzyme catalyses carbamoyl phosphate + L-aspartate = N-carbamoyl-L-aspartate + phosphate + H(+). Its pathway is pyrimidine metabolism; UMP biosynthesis via de novo pathway; (S)-dihydroorotate from bicarbonate: step 2/3. In terms of biological role, catalyzes the condensation of carbamoyl phosphate and aspartate to form carbamoyl aspartate and inorganic phosphate, the committed step in the de novo pyrimidine nucleotide biosynthesis pathway. The protein is Aspartate carbamoyltransferase catalytic subunit of Chlorobium phaeovibrioides (strain DSM 265 / 1930) (Prosthecochloris vibrioformis (strain DSM 265)).